Here is a 250-residue protein sequence, read N- to C-terminus: 5-oxoprolinase subunit A (250 aa).

The protein belongs to the LamB/PxpA family. Forms a complex composed of PxpA, PxpB and PxpC.

It carries out the reaction 5-oxo-L-proline + ATP + 2 H2O = L-glutamate + ADP + phosphate + H(+). Its function is as follows. Catalyzes the cleavage of 5-oxoproline to form L-glutamate coupled to the hydrolysis of ATP to ADP and inorganic phosphate. This Staphylococcus aureus (strain Mu3 / ATCC 700698) protein is 5-oxoprolinase subunit A.